Reading from the N-terminus, the 258-residue chain is Regulatory protein RecX (258 aa).

Belongs to the RecX family.

It localises to the cytoplasm. Modulates RecA activity. The chain is Regulatory protein RecX from Streptococcus pyogenes serotype M5 (strain Manfredo).